The chain runs to 258 residues: Type III pantothenate kinase (258 aa).

6-13 (DVGNTNTV) serves as a coordination point for ATP. Substrate is bound by residues tyrosine 100 and 107-110 (GADR). Aspartate 109 acts as the Proton acceptor in catalysis. Aspartate 129 contributes to the K(+) binding site. An ATP-binding site is contributed by threonine 132. Threonine 184 serves as a coordination point for substrate.

Belongs to the type III pantothenate kinase family. In terms of assembly, homodimer. It depends on NH4(+) as a cofactor. The cofactor is K(+).

The protein resides in the cytoplasm. The enzyme catalyses (R)-pantothenate + ATP = (R)-4'-phosphopantothenate + ADP + H(+). It participates in cofactor biosynthesis; coenzyme A biosynthesis; CoA from (R)-pantothenate: step 1/5. Not regulated by feedback inhibition by CoA and its thioesters as described for many other pantothenate kinases. Not inhibited by N-pentylpantothenamide (N5-Pan), and this compound cannot act as a substrate either. Catalyzes the phosphorylation of pantothenate (Pan), the first step in CoA biosynthesis. Cannot utilize a phosphoryl donor other than ATP. This is Type III pantothenate kinase (coaX) from Bacillus subtilis (strain 168).